Reading from the N-terminus, the 610-residue chain is Autophagy-related protein 22-1 (610 aa).

The segment covering 1-11 has biased composition (pro residues); sequence MAFTPSSPPSP. Positions 1–29 are disordered; that stretch reads MAFTPSSPPSPAADASQRPSRYPGEDTTP. Residues 35 to 55 traverse the membrane as a helical segment; sequence ILGWYAYGIAAEVFAVCGVGS. Asparagine 90 carries N-linked (GlcNAc...) asparagine glycosylation. 3 helical membrane-spanning segments follow: residues 120–140, 152–171, and 189–209; these read SFAM…LISF, TLLL…FVFV, and CLGS…ANDP. The disordered stretch occupies residues 229-265; sequence GQFEPRDSFSERNPEFESQYTPGIGLGSKPSTNATSP. Basic and acidic residues predominate over residues 232 to 243; that stretch reads EPRDSFSERNPE. Asparagine 261 carries N-linked (GlcNAc...) asparagine glycosylation. 8 helical membrane passes run 278–298, 310–330, 384–404, 418–438, 453–473, 488–510, 522–544, and 553–573; these read VGLG…LLFA, TLPL…FTMV, VFLV…GTAI, VGCL…LWPV, LCIA…IPLF, FPLA…SFFG, YALY…GMLI, and GFFF…MVNA. Positions 588–610 are disordered; it reads AKGQESETGEPGEEAEGLLARGA. Positions 594–603 are enriched in acidic residues; that stretch reads ETGEPGEEAE.

It belongs to the ATG22 family.

The protein localises to the vacuole membrane. Functionally, vacuolar effluxer which mediate the efflux of amino acids resulting from autophagic degradation. The release of autophagic amino acids allows the maintenance of protein synthesis and viability during nitrogen starvation. The chain is Autophagy-related protein 22-1 (atg22-1) from Aspergillus terreus (strain NIH 2624 / FGSC A1156).